An 896-amino-acid chain; its full sequence is Alanine--tRNA ligase (896 aa).

Zn(2+) contacts are provided by His-574, His-578, Cys-677, and His-681.

The protein belongs to the class-II aminoacyl-tRNA synthetase family. Zn(2+) is required as a cofactor.

The protein localises to the cytoplasm. The catalysed reaction is tRNA(Ala) + L-alanine + ATP = L-alanyl-tRNA(Ala) + AMP + diphosphate. Functionally, catalyzes the attachment of alanine to tRNA(Ala) in a two-step reaction: alanine is first activated by ATP to form Ala-AMP and then transferred to the acceptor end of tRNA(Ala). Also edits incorrectly charged Ser-tRNA(Ala) and Gly-tRNA(Ala) via its editing domain. This is Alanine--tRNA ligase from Mycoplasma mycoides subsp. mycoides SC (strain CCUG 32753 / NCTC 10114 / PG1).